The chain runs to 394 residues: Carbamoyl phosphate synthase small chain (394 aa).

Residues Met-1–Arg-188 form a CPSase region. Ser-49, Gly-240, and Gly-242 together coordinate L-glutamine. The Glutamine amidotransferase type-1 domain maps to Arg-192 to Gly-379. The active-site Nucleophile is Cys-267. 5 residues coordinate L-glutamine: Leu-268, Gln-271, Asn-309, Gly-311, and Tyr-312. Active-site residues include His-352 and Glu-354.

This sequence belongs to the CarA family. In terms of assembly, composed of two chains; the small (or glutamine) chain promotes the hydrolysis of glutamine to ammonia, which is used by the large (or ammonia) chain to synthesize carbamoyl phosphate. Tetramer of heterodimers (alpha,beta)4.

The enzyme catalyses hydrogencarbonate + L-glutamine + 2 ATP + H2O = carbamoyl phosphate + L-glutamate + 2 ADP + phosphate + 2 H(+). It carries out the reaction L-glutamine + H2O = L-glutamate + NH4(+). The protein operates within amino-acid biosynthesis; L-arginine biosynthesis; carbamoyl phosphate from bicarbonate: step 1/1. It participates in pyrimidine metabolism; UMP biosynthesis via de novo pathway; (S)-dihydroorotate from bicarbonate: step 1/3. Functionally, small subunit of the glutamine-dependent carbamoyl phosphate synthetase (CPSase). CPSase catalyzes the formation of carbamoyl phosphate from the ammonia moiety of glutamine, carbonate, and phosphate donated by ATP, constituting the first step of 2 biosynthetic pathways, one leading to arginine and/or urea and the other to pyrimidine nucleotides. The small subunit (glutamine amidotransferase) binds and cleaves glutamine to supply the large subunit with the substrate ammonia. The polypeptide is Carbamoyl phosphate synthase small chain (Deinococcus radiodurans (strain ATCC 13939 / DSM 20539 / JCM 16871 / CCUG 27074 / LMG 4051 / NBRC 15346 / NCIMB 9279 / VKM B-1422 / R1)).